Reading from the N-terminus, the 484-residue chain is tRNA sulfurtransferase (484 aa).

In terms of domain architecture, THUMP spans 56-158 (NCLKKALSKV…GNRAYFYTEV (103 aa)). Residues 176-177 (LV), lysine 257, glycine 279, and glutamine 288 each bind ATP. Cysteine 336 and cysteine 444 are disulfide-bonded. The Rhodanese domain maps to 396–479 (APEGAVIVDL…TRNAVPPSSQ (84 aa)). Cysteine 444 functions as the Cysteine persulfide intermediate in the catalytic mechanism.

This sequence belongs to the ThiI family.

It is found in the cytoplasm. It catalyses the reaction [ThiI sulfur-carrier protein]-S-sulfanyl-L-cysteine + a uridine in tRNA + 2 reduced [2Fe-2S]-[ferredoxin] + ATP + H(+) = [ThiI sulfur-carrier protein]-L-cysteine + a 4-thiouridine in tRNA + 2 oxidized [2Fe-2S]-[ferredoxin] + AMP + diphosphate. The enzyme catalyses [ThiS sulfur-carrier protein]-C-terminal Gly-Gly-AMP + S-sulfanyl-L-cysteinyl-[cysteine desulfurase] + AH2 = [ThiS sulfur-carrier protein]-C-terminal-Gly-aminoethanethioate + L-cysteinyl-[cysteine desulfurase] + A + AMP + 2 H(+). It participates in cofactor biosynthesis; thiamine diphosphate biosynthesis. Functionally, catalyzes the ATP-dependent transfer of a sulfur to tRNA to produce 4-thiouridine in position 8 of tRNAs, which functions as a near-UV photosensor. Also catalyzes the transfer of sulfur to the sulfur carrier protein ThiS, forming ThiS-thiocarboxylate. This is a step in the synthesis of thiazole, in the thiamine biosynthesis pathway. The sulfur is donated as persulfide by IscS. This is tRNA sulfurtransferase from Pyrobaculum aerophilum (strain ATCC 51768 / DSM 7523 / JCM 9630 / CIP 104966 / NBRC 100827 / IM2).